Here is a 387-residue protein sequence, read N- to C-terminus: Peroxisomal membrane protein LPX1 (387 aa).

The peroxisomal targeting signal type 1 stretch occupies residues 385 to 387; that stretch reads QKL.

It localises to the peroxisome matrix. In terms of biological role, has acyl esterase, lipase and phospholipase A activity. This Saccharomyces cerevisiae (strain ATCC 204508 / S288c) (Baker's yeast) protein is Peroxisomal membrane protein LPX1 (LPX1).